Reading from the N-terminus, the 525-residue chain is D-arabinono-1,4-lactone oxidase (525 aa).

In terms of domain architecture, FAD-binding PCMH-type spans 23–197 (YSCRPQLYFQ…VKATIRVIPE (175 aa)). H60 is modified (pros-8alpha-FAD histidine).

This sequence belongs to the oxygen-dependent FAD-linked oxidoreductase family. FAD serves as cofactor.

The protein localises to the mitochondrion membrane. It catalyses the reaction D-arabinono-1,4-lactone + O2 = dehydro-D-arabinono-1,4-lactone + H2O2 + H(+). It participates in cofactor biosynthesis; D-erythroascorbate biosynthesis; dehydro-D-arabinono-1,4-lactone from D-arabinose: step 2/2. The sequence is that of D-arabinono-1,4-lactone oxidase (ALO1) from Kluyveromyces lactis (strain ATCC 8585 / CBS 2359 / DSM 70799 / NBRC 1267 / NRRL Y-1140 / WM37) (Yeast).